Consider the following 409-residue polypeptide: Peptidase T (409 aa).

H78 serves as a coordination point for Zn(2+). Residue D80 is part of the active site. Residue D139 coordinates Zn(2+). The Proton acceptor role is filled by E173. Residues E174, D196, and H378 each contribute to the Zn(2+) site.

Belongs to the peptidase M20B family. The cofactor is Zn(2+).

It localises to the cytoplasm. It carries out the reaction Release of the N-terminal residue from a tripeptide.. Its function is as follows. Cleaves the N-terminal amino acid of tripeptides. The sequence is that of Peptidase T from Shewanella sediminis (strain HAW-EB3).